Here is a 224-residue protein sequence, read N- to C-terminus: MFFNKKNNQDELKKLAATEAAKSITTEITLGVGTGSTVGFLIEELVNYRDKIKTVVSSSEDSTRKLKALGFDVVDLNYAGEIDLYIDGADECNNHKELIKGGGAALTREKICVAAAKKFICIIDESKKVNTLGNFPLPIEVIPMARSYIARQIVKLGGQPVYREQTITDNGNVILDVYNLKIDNPLKLETELNQITGVVTNGIFALKPADTVIMATKDSNIVVL.

Substrate-binding positions include threonine 34 to threonine 37, aspartate 87 to aspartate 90, and lysine 100 to glycine 103. Catalysis depends on glutamate 109, which acts as the Proton acceptor. Position 127 (lysine 127) interacts with substrate.

This sequence belongs to the ribose 5-phosphate isomerase family. Homodimer.

The catalysed reaction is aldehydo-D-ribose 5-phosphate = D-ribulose 5-phosphate. It functions in the pathway carbohydrate degradation; pentose phosphate pathway; D-ribose 5-phosphate from D-ribulose 5-phosphate (non-oxidative stage): step 1/1. Catalyzes the reversible conversion of ribose-5-phosphate to ribulose 5-phosphate. The protein is Ribose-5-phosphate isomerase A of Francisella tularensis subsp. tularensis (strain FSC 198).